Here is a 387-residue protein sequence, read N- to C-terminus: Paralemmin-1 (387 aa).

Met-1 bears the N-acetylmethionine mark. The stretch at 7-104 (ETISQQERLQ…IEELENADTL (98 aa)) forms a coiled coil. Disordered regions lie at residues 22–78 (RRRQ…QEDE) and 98–133 (LENA…DRKA). Composition is skewed to basic and acidic residues over residues 25-41 (QAEV…DRRQ) and 69-78 (DMRKQMQEDE). The residue at position 116 (Ser-116) is a Phosphoserine. A compositionally biased stretch (pro residues) spans 116–125 (SPGPVVPAPC). A phosphothreonine mark is found at Thr-142 and Thr-146. Ser-163 is subject to Phosphoserine. Thr-244 carries the post-translational modification Phosphothreonine. At Ser-246 the chain carries Phosphoserine. Disordered regions lie at residues 246–297 (SEAG…QEPP) and 334–378 (AAEP…DMKK). A compositionally biased stretch (basic and acidic residues) spans 258–273 (GPSEEVVRTTPSRREI). The segment covering 286-297 (GPPGIQPGQEPP) has biased composition (low complexity). Phosphoserine is present on residues Ser-346 and Ser-369. 2 S-palmitoyl cysteine lipidation sites follow: Cys-381 and Cys-383. Cys-384 bears the Cysteine methyl ester mark. Cys-384 carries the S-farnesyl cysteine lipid modification. The propeptide at 385–387 (SIM) is removed in mature form.

Belongs to the paralemmin family. As to quaternary structure, interacts with dopamine receptor DRD3. Phosphorylated.

The protein localises to the cell membrane. Its subcellular location is the cell projection. It is found in the filopodium membrane. It localises to the axon. The protein resides in the dendrite. The protein localises to the dendritic spine. Its subcellular location is the basolateral cell membrane. It is found in the apicolateral cell membrane. Involved in plasma membrane dynamics and cell process formation. Necessary for axonal and dendritic filopodia induction, for dendritic spine maturation and synapse formation in a palmitoylation-dependent manner. This Sus scrofa (Pig) protein is Paralemmin-1 (PALM).